The chain runs to 117 residues: Large ribosomal subunit protein bL19 (117 aa).

The protein belongs to the bacterial ribosomal protein bL19 family.

In terms of biological role, this protein is located at the 30S-50S ribosomal subunit interface and may play a role in the structure and function of the aminoacyl-tRNA binding site. This is Large ribosomal subunit protein bL19 from Methylibium petroleiphilum (strain ATCC BAA-1232 / LMG 22953 / PM1).